A 103-amino-acid polypeptide reads, in one-letter code: UPF0145 protein BT9727_3206 (103 aa).

Belongs to the UPF0145 family.

In Bacillus thuringiensis subsp. konkukian (strain 97-27), this protein is UPF0145 protein BT9727_3206.